The chain runs to 479 residues: Catalase A (479 aa).

H63 is an active-site residue. Heme is bound at residue Y346.

It belongs to the catalase family. Heme is required as a cofactor.

Its subcellular location is the peroxisome matrix. It carries out the reaction 2 H2O2 = O2 + 2 H2O. Functionally, catalyzes the degradation of hydrogen peroxide (H(2)O(2)) generated by peroxisomal oxidases to water and oxygen, thereby protecting cells from the toxic effects of hydrogen peroxide. The polypeptide is Catalase A (catA) (Botryotinia fuckeliana (Noble rot fungus)).